The chain runs to 75 residues: Sec-independent protein translocase protein TatA (75 aa).

A helical transmembrane segment spans residues 1 to 21; it reads MGSFSIWHWLIVLVIVLLVFG. A disordered region spans residues 41–75; sequence KGMHDDDKPAGKLGDDSRSAEQAREAQAERDRDAR.

It belongs to the TatA/E family. As to quaternary structure, the Tat system comprises two distinct complexes: a TatABC complex, containing multiple copies of TatA, TatB and TatC subunits, and a separate TatA complex, containing only TatA subunits. Substrates initially bind to the TatABC complex, which probably triggers association of the separate TatA complex to form the active translocon.

The protein resides in the cell inner membrane. Functionally, part of the twin-arginine translocation (Tat) system that transports large folded proteins containing a characteristic twin-arginine motif in their signal peptide across membranes. TatA could form the protein-conducting channel of the Tat system. In Xanthomonas campestris pv. campestris (strain 8004), this protein is Sec-independent protein translocase protein TatA.